A 357-amino-acid chain; its full sequence is Tetraacyldisaccharide 4'-kinase (357 aa).

54–61 (TVGGAGKT) provides a ligand contact to ATP.

It belongs to the LpxK family.

The catalysed reaction is a lipid A disaccharide + ATP = a lipid IVA + ADP + H(+). Its pathway is glycolipid biosynthesis; lipid IV(A) biosynthesis; lipid IV(A) from (3R)-3-hydroxytetradecanoyl-[acyl-carrier-protein] and UDP-N-acetyl-alpha-D-glucosamine: step 6/6. Transfers the gamma-phosphate of ATP to the 4'-position of a tetraacyldisaccharide 1-phosphate intermediate (termed DS-1-P) to form tetraacyldisaccharide 1,4'-bis-phosphate (lipid IVA). The polypeptide is Tetraacyldisaccharide 4'-kinase (Rhizobium leguminosarum bv. trifolii (strain WSM2304)).